The following is an 88-amino-acid chain: Small ribosomal subunit protein bS20 (88 aa).

Residues 1–23 (MPNTKSAEKALRVADANRQENRR) are compositionally biased toward basic and acidic residues. Disordered stretches follow at residues 1–28 (MPNT…KSQV) and 69–88 (PKNA…QAAK). The span at 71–81 (NAARRKSRLMK) shows a compositional bias: basic residues.

It belongs to the bacterial ribosomal protein bS20 family.

Its function is as follows. Binds directly to 16S ribosomal RNA. This chain is Small ribosomal subunit protein bS20, found in Dehalococcoides mccartyi (strain ATCC BAA-2266 / KCTC 15142 / 195) (Dehalococcoides ethenogenes (strain 195)).